The primary structure comprises 421 residues: Putative aspartate aminotransferase, cytoplasmic 2 (421 aa).

Lys249 is modified (N6-(pyridoxal phosphate)lysine).

The protein belongs to the class-I pyridoxal-phosphate-dependent aminotransferase family. Homodimer. The cofactor is pyridoxal 5'-phosphate.

Its subcellular location is the cytoplasm. It carries out the reaction L-aspartate + 2-oxoglutarate = oxaloacetate + L-glutamate. This Homo sapiens (Human) protein is Putative aspartate aminotransferase, cytoplasmic 2 (GOT1L1).